The following is a 629-amino-acid chain: Interleukin-23 receptor (629 aa).

Residues 1-23 form the signal peptide; it reads MNQVTIQWDAVIALYILFSWCHG. The Extracellular portion of the chain corresponds to 24–355; the sequence is GITNINCSGH…LTSDNRGDIG (332 aa). A glycan (N-linked (GlcNAc...) asparagine; partial) is linked at Asn29. Asn47, Asn81, and Asn141 each carry an N-linked (GlcNAc...) asparagine glycan. 2 consecutive Fibronectin type-III domains span residues 127-217 and 219-318; these read IPDE…LDDI and IPSA…TPET. N-linked (GlcNAc...) (high mannose) asparagine glycosylation occurs at Asn180. Residues Asn232 and Asn262 are each glycosylated (N-linked (GlcNAc...) asparagine). N-linked (GlcNAc...) asparagine; partial glycosylation occurs at Asn273. Residues 356-376 form a helical membrane-spanning segment; the sequence is LLLGMIVFAVMLSILSLIGIF. Topologically, residues 377–629 are cytoplasmic; it reads NRSFRTGIKR…HFNRISLLEK (253 aa).

Belongs to the type I cytokine receptor family. Type 2 subfamily. As to quaternary structure, heterodimer with IL12RB1. In presence of IL23, the heterodimer forms the IL23 receptor. Interacts with JAK2 and in presence of IL23 with STAT3. Post-translationally, phosphorylated in response to IL23. In terms of tissue distribution, expressed by monocytes, Th1, Th0, NK and dendritic cells. Isoform 1 is specifically expressed in NK cells.

It is found in the cell membrane. Associates with IL12RB1 to form the interleukin-23 receptor. Binds IL23 and mediates T-cells, NK cells and possibly certain macrophage/myeloid cells stimulation probably through activation of the Jak-Stat signaling cascade. IL23 functions in innate and adaptive immunity and may participate in acute response to infection in peripheral tissues. IL23 may be responsible for autoimmune inflammatory diseases and be important for tumorigenesis. The chain is Interleukin-23 receptor (IL23R) from Homo sapiens (Human).